We begin with the raw amino-acid sequence, 373 residues long: tRNA-specific 2-thiouridylase MnmA (373 aa).

ATP contacts are provided by residues 12–19 (GMSGGVDS) and Met-38. Positions 98–100 (NPD) are interaction with target base in tRNA. The active-site Nucleophile is the Cys-103. Cys-103 and Cys-200 form a disulfide bridge. An ATP-binding site is contributed by Gly-127. The interval 150–152 (KDQ) is interaction with tRNA. The active-site Cysteine persulfide intermediate is Cys-200. The interaction with tRNA stretch occupies residues 312-313 (RY).

Belongs to the MnmA/TRMU family.

The protein localises to the cytoplasm. The enzyme catalyses S-sulfanyl-L-cysteinyl-[protein] + uridine(34) in tRNA + AH2 + ATP = 2-thiouridine(34) in tRNA + L-cysteinyl-[protein] + A + AMP + diphosphate + H(+). In terms of biological role, catalyzes the 2-thiolation of uridine at the wobble position (U34) of tRNA, leading to the formation of s(2)U34. The protein is tRNA-specific 2-thiouridylase MnmA of Streptococcus pyogenes serotype M28 (strain MGAS6180).